Consider the following 819-residue polypeptide: Probable beta-glucosidase G (819 aa).

An N-terminal signal peptide occupies residues 1–20; the sequence is MTSASQILVWGLLAASGAQA. N-linked (GlcNAc...) asparagine glycans are attached at residues N41, N59, N107, N228, and N277. D305 is a catalytic residue. N-linked (GlcNAc...) asparagine glycans are attached at residues N337, N344, N351, N403, N500, N509, N554, N567, N588, N627, N683, and N719.

It belongs to the glycosyl hydrolase 3 family.

The protein resides in the secreted. The enzyme catalyses Hydrolysis of terminal, non-reducing beta-D-glucosyl residues with release of beta-D-glucose.. It functions in the pathway glycan metabolism; cellulose degradation. Its function is as follows. Beta-glucosidases are one of a number of cellulolytic enzymes involved in the degradation of cellulosic biomass. Catalyzes the last step releasing glucose from the inhibitory cellobiose. This is Probable beta-glucosidase G (bglG) from Emericella nidulans (strain FGSC A4 / ATCC 38163 / CBS 112.46 / NRRL 194 / M139) (Aspergillus nidulans).